The chain runs to 691 residues: Lipase 2 (691 aa).

Residues 1 to 37 form the signal peptide; it reads MLRGQEERKYSIRKYSIGVVSVLAATMFVVSSHEAQA. Residues 34 to 72 are compositionally biased toward polar residues; sequence EAQASEKTPTSNAAAQKETLNQPGEQGNAITSHQMQSGK. Residues 34 to 267 form a disordered region; that stretch reads EAQASEKTPT…KPTDKNTDNK (234 aa). Residues 38–296 constitute a propeptide that is removed on maturation; it reads SEKTPTSNAA…ADAKKVRPLK (259 aa). Residues 73-82 are compositionally biased toward basic and acidic residues; sequence QLDDMHKENG. Composition is skewed to polar residues over residues 83-115, 125-172, and 186-207; these read KSGT…NDNQ, SKQS…QPSI, and PTST…AQDA. Basic and acidic residues-rich tracts occupy residues 226-238 and 258-267; these read IDAK…RQSE and KPTDKNTDNK. Serine 413 (nucleophile) is an active-site residue. A Ca(2+)-binding site is contributed by glycine 580. Catalysis depends on aspartate 604, which acts as the Charge relay system. Aspartate 645 lines the Ca(2+) pocket. The Charge relay system role is filled by histidine 646. Residues aspartate 648, aspartate 653, and aspartate 656 each contribute to the Ca(2+) site.

The protein belongs to the AB hydrolase superfamily. Lipase family.

The protein localises to the secreted. It carries out the reaction a triacylglycerol + H2O = a diacylglycerol + a fatty acid + H(+). This is Lipase 2 (lip2) from Staphylococcus aureus (strain Mu50 / ATCC 700699).